Reading from the N-terminus, the 125-residue chain is uncharacterized protein (125 aa).

Residues 50–73 form a disordered region; sequence QTSDFSDESSRSDSSSVTNENEVS.

This is an uncharacterized protein from Microplitis demolitor (Parasitoid wasp).